The sequence spans 233 residues: VIGGDECDINEHRFLAFLYPGRFFCSGTLINQEWVLTVAHCDTISMRIYLGLHTRSVPNDDEEIRYPMEKFKCPNRKRSYIKDKDIMLIRLNRPVNDSPHIAPLSLPSNPPSVGSVCHVMGWGTTSPSKATYPDVPHCANINLVNDTMCHGAYNGLPVTSRKFCAGVLQGGIDTCVGDSGGPLICNGQFQGIVSWGGKVCARLPRPALYTKVFEYLPWIQSIIAGNTTATCPL.

The 224-residue stretch at 1–224 (VIGGDECDIN…YLPWIQSIIA (224 aa)) folds into the Peptidase S1 domain. Disulfide bonds link C7-C138, C25-C41, C73-C231, C117-C185, C149-C164, and C175-C200. Residues H40 and D85 each act as charge relay system in the active site. The Charge relay system role is filled by S179.

This sequence belongs to the peptidase S1 family. Snake venom subfamily. In terms of assembly, monomer. Expressed by the venom gland.

The protein resides in the secreted. In terms of biological role, snake venom serine protease that may act in the hemostasis system of the prey. This is Snake venom serine protease BthaTL from Bothrops alternatus (Urutu).